The following is a 420-amino-acid chain: Light-independent protochlorophyllide reductase subunit N (420 aa).

[4Fe-4S] cluster-binding residues include C21, C46, and C103.

Belongs to the BchN/ChlN family. In terms of assembly, protochlorophyllide reductase is composed of three subunits; BchL, BchN and BchB. Forms a heterotetramer of two BchB and two BchN subunits. [4Fe-4S] cluster is required as a cofactor.

The catalysed reaction is chlorophyllide a + oxidized 2[4Fe-4S]-[ferredoxin] + 2 ADP + 2 phosphate = protochlorophyllide a + reduced 2[4Fe-4S]-[ferredoxin] + 2 ATP + 2 H2O. Its pathway is porphyrin-containing compound metabolism; bacteriochlorophyll biosynthesis (light-independent). Functionally, component of the dark-operative protochlorophyllide reductase (DPOR) that uses Mg-ATP and reduced ferredoxin to reduce ring D of protochlorophyllide (Pchlide) to form chlorophyllide a (Chlide). This reaction is light-independent. The NB-protein (BchN-BchB) is the catalytic component of the complex. The protein is Light-independent protochlorophyllide reductase subunit N of Chlorobium luteolum (strain DSM 273 / BCRC 81028 / 2530) (Pelodictyon luteolum).